We begin with the raw amino-acid sequence, 737 residues long: Zinc finger protein 280C (737 aa).

Residues Lys-5, Lys-10, Lys-14, Lys-33, and Lys-55 each participate in a glycyl lysine isopeptide (Lys-Gly) (interchain with G-Cter in SUMO2) cross-link. Residues Ala-57–His-66 show a composition bias toward polar residues. The disordered stretch occupies residues Ala-57 to Ser-137. Residue Lys-75 forms a Glycyl lysine isopeptide (Lys-Gly) (interchain with G-Cter in SUMO2) linkage. Ser-80 is subject to Phosphoserine. The span at Ser-112–Asn-123 shows a compositional bias: polar residues. Glycyl lysine isopeptide (Lys-Gly) (interchain with G-Cter in SUMO2) cross-links involve residues Lys-113, Lys-126, Lys-167, Lys-174, Lys-180, and Lys-187. The segment covering Pro-176 to Thr-185 has biased composition (polar residues). The interval Pro-176–Thr-223 is disordered. Residues Pro-211–Thr-223 are compositionally biased toward polar residues. Phosphothreonine is present on Thr-223. Ser-227 is subject to Phosphoserine. A Glycyl lysine isopeptide (Lys-Gly) (interchain with G-Cter in SUMO2) cross-link involves residue Lys-273. 5 C2H2-type zinc fingers span residues Phe-316–His-338, Thr-353–His-376, Thr-383–His-406, Tyr-413–His-436, and His-470–His-492. Lys-522 participates in a covalent cross-link: Glycyl lysine isopeptide (Lys-Gly) (interchain with G-Cter in SUMO2). Residues Ser-535–Lys-579 show a composition bias toward polar residues. A disordered region spans residues Ser-535–Lys-602. Thr-540 bears the Phosphothreonine mark. Glycyl lysine isopeptide (Lys-Gly) (interchain with G-Cter in SUMO2) cross-links involve residues Lys-564 and Lys-574. The segment covering Pro-580 to Lys-602 has biased composition (basic residues).

It is found in the nucleus. In terms of biological role, may function as a transcription factor. This Homo sapiens (Human) protein is Zinc finger protein 280C (ZNF280C).